A 151-amino-acid polypeptide reads, in one-letter code: Deoxyuridine 5'-triphosphate nucleotidohydrolase (151 aa).

Substrate is bound by residues 70-72, Asn-83, 87-89, and Met-97; these read RSG and LID.

Belongs to the dUTPase family. It depends on Mg(2+) as a cofactor.

The catalysed reaction is dUTP + H2O = dUMP + diphosphate + H(+). It functions in the pathway pyrimidine metabolism; dUMP biosynthesis; dUMP from dCTP (dUTP route): step 2/2. Functionally, this enzyme is involved in nucleotide metabolism: it produces dUMP, the immediate precursor of thymidine nucleotides and it decreases the intracellular concentration of dUTP so that uracil cannot be incorporated into DNA. In Azotobacter vinelandii (strain DJ / ATCC BAA-1303), this protein is Deoxyuridine 5'-triphosphate nucleotidohydrolase.